The primary structure comprises 150 residues: Mating pheromone 1 (150 aa).

Residues 1–16 (MKAIFIILAILMVTQA) form the signal peptide. A propeptide spanning residues 17 to 52 (FKMTSKVNTKLQSQIQSKFQSKNKLASTFQTSSKLK) is cleaved from the precursor.

The protein resides in the secreted. Functionally, mating ciliate pheromones (or gamones) are diffusible extracellular communication signals that distinguish different intraspecific classes of cells commonly referred to as 'mating types'. They prepare the latter for conjugation by changing their cell surface properties. The chain is Mating pheromone 1 from Euplotoides octocarinatus (Freshwater ciliate).